A 1299-amino-acid polypeptide reads, in one-letter code: DNA-directed RNA polymerase subunit beta' (1299 aa).

Residues Cys-60, Cys-62, Cys-75, and Cys-78 each contribute to the Zn(2+) site. The tract at residues 385-405 (GRRGRPVTGPGNRPLKSLSDM) is disordered. The Mg(2+) site is built by Asp-535, Asp-537, and Asp-539. Cys-886, Cys-962, Cys-969, and Cys-972 together coordinate Zn(2+).

It belongs to the RNA polymerase beta' chain family. In terms of assembly, the RNAP catalytic core consists of 2 alpha, 1 beta, 1 beta' and 1 omega subunit. When a sigma factor is associated with the core the holoenzyme is formed, which can initiate transcription. Mg(2+) serves as cofactor. Zn(2+) is required as a cofactor.

The enzyme catalyses RNA(n) + a ribonucleoside 5'-triphosphate = RNA(n+1) + diphosphate. Its function is as follows. DNA-dependent RNA polymerase catalyzes the transcription of DNA into RNA using the four ribonucleoside triphosphates as substrates. In Streptomyces avermitilis (strain ATCC 31267 / DSM 46492 / JCM 5070 / NBRC 14893 / NCIMB 12804 / NRRL 8165 / MA-4680), this protein is DNA-directed RNA polymerase subunit beta'.